The following is a 258-amino-acid chain: Adenosylcobinamide-GDP ribazoletransferase (258 aa).

Transmembrane regions (helical) follow at residues 41–61 (FFPLVGWLVGAAGALAYWLAS), 65–85 (PAPGVAVAASMAATLLLTGAF), 115–135 (IGAFGAIAVCMALLLKWQLLM), 136–156 (AMAAQHAAAAMAAMVAAHAAS), 197–217 (LPLLGFGMACAAIAVAVLLAA), and 236–256 (CLGLAQQVFELLVLWVLLAWT).

This sequence belongs to the CobS family. The cofactor is Mg(2+).

Its subcellular location is the cell inner membrane. It carries out the reaction alpha-ribazole + adenosylcob(III)inamide-GDP = adenosylcob(III)alamin + GMP + H(+). The enzyme catalyses alpha-ribazole 5'-phosphate + adenosylcob(III)inamide-GDP = adenosylcob(III)alamin 5'-phosphate + GMP + H(+). It participates in cofactor biosynthesis; adenosylcobalamin biosynthesis; adenosylcobalamin from cob(II)yrinate a,c-diamide: step 7/7. Functionally, joins adenosylcobinamide-GDP and alpha-ribazole to generate adenosylcobalamin (Ado-cobalamin). Also synthesizes adenosylcobalamin 5'-phosphate from adenosylcobinamide-GDP and alpha-ribazole 5'-phosphate. The chain is Adenosylcobinamide-GDP ribazoletransferase from Ralstonia nicotianae (strain ATCC BAA-1114 / GMI1000) (Ralstonia solanacearum).